Consider the following 247-residue polypeptide: UPF0259 membrane protein BUAPTUC7_273 (247 aa).

6 helical membrane passes run 20–40 (IGAI…IDMF), 85–105 (IMES…LISF), 114–134 (IVSS…LNFL), 137–157 (FIIQ…SIIL), 188–208 (IIGP…MLLA), and 218–238 (LFLI…IYLF).

Belongs to the UPF0259 family.

The protein localises to the cell membrane. The chain is UPF0259 membrane protein BUAPTUC7_273 from Buchnera aphidicola subsp. Acyrthosiphon pisum (strain Tuc7).